Consider the following 82-residue polypeptide: UPF0298 protein SPCG_0698 (82 aa).

The protein belongs to the UPF0298 family.

Its subcellular location is the cytoplasm. This is UPF0298 protein SPCG_0698 from Streptococcus pneumoniae (strain CGSP14).